The sequence spans 412 residues: Isocitrate dehydrogenase [NADP] cytoplasmic (412 aa).

Residues 76 to 78 and arginine 83 each bind NADP(+); that span reads TIT. Residue threonine 78 coordinates substrate. Substrate is bound by residues 95-101, arginine 110, and arginine 133; that span reads SPNGTIR. Residue aspartate 253 coordinates Mn(2+). Position 261 (lysine 261) interacts with NADP(+). A Mn(2+)-binding site is contributed by aspartate 276. NADP(+) is bound by residues 309 to 314 and asparagine 327; that span reads GTVTRH.

Belongs to the isocitrate and isopropylmalate dehydrogenases family. As to quaternary structure, homodimer. The cofactor is Mg(2+). Mn(2+) serves as cofactor.

It is found in the cytoplasm. It carries out the reaction D-threo-isocitrate + NADP(+) = 2-oxoglutarate + CO2 + NADPH. The sequence is that of Isocitrate dehydrogenase [NADP] cytoplasmic (idhC) from Dictyostelium discoideum (Social amoeba).